The primary structure comprises 281 residues: Diphthine methyl ester synthase (281 aa).

Residues L9, D84, G87, 112-113 (SI), and L163 contribute to the S-adenosyl-L-methionine site. S171 carries the phosphoserine modification. V225 and H250 together coordinate S-adenosyl-L-methionine.

The protein belongs to the diphthine synthase family.

The catalysed reaction is 2-[(3S)-amino-3-carboxypropyl]-L-histidyl-[translation elongation factor 2] + 4 S-adenosyl-L-methionine = diphthine methyl ester-[translation elongation factor 2] + 4 S-adenosyl-L-homocysteine + 3 H(+). It functions in the pathway protein modification; peptidyl-diphthamide biosynthesis. S-adenosyl-L-methionine-dependent methyltransferase that catalyzes four methylations of the modified target histidine residue in translation elongation factor 2 (EF-2), to form an intermediate called diphthine methyl ester. The four successive methylation reactions represent the second step of diphthamide biosynthesis. The chain is Diphthine methyl ester synthase (Dph5) from Mus musculus (Mouse).